We begin with the raw amino-acid sequence, 1345 residues long: DNA-directed RNA polymerase subunit beta (1345 aa).

This sequence belongs to the RNA polymerase beta chain family. As to quaternary structure, the RNAP catalytic core consists of 2 alpha, 1 beta, 1 beta' and 1 omega subunit. When a sigma factor is associated with the core the holoenzyme is formed, which can initiate transcription.

The catalysed reaction is RNA(n) + a ribonucleoside 5'-triphosphate = RNA(n+1) + diphosphate. DNA-dependent RNA polymerase catalyzes the transcription of DNA into RNA using the four ribonucleoside triphosphates as substrates. This is DNA-directed RNA polymerase subunit beta from Shewanella sp. (strain MR-4).